A 177-amino-acid polypeptide reads, in one-letter code: Adenine phosphoribosyltransferase (177 aa).

Belongs to the purine/pyrimidine phosphoribosyltransferase family. In terms of assembly, homodimer.

Its subcellular location is the cytoplasm. The catalysed reaction is AMP + diphosphate = 5-phospho-alpha-D-ribose 1-diphosphate + adenine. It functions in the pathway purine metabolism; AMP biosynthesis via salvage pathway; AMP from adenine: step 1/1. Functionally, catalyzes a salvage reaction resulting in the formation of AMP, that is energically less costly than de novo synthesis. The polypeptide is Adenine phosphoribosyltransferase (Leptospira interrogans serogroup Icterohaemorrhagiae serovar copenhageni (strain Fiocruz L1-130)).